The sequence spans 1802 residues: Protein TIC 214 (1802 aa).

The next 6 helical transmembrane spans lie at 19 to 39, 68 to 88, 91 to 111, 133 to 153, 176 to 196, and 227 to 247; these read IINS…FSIG, FIAG…HLAL, PHTI…WNNH, VFLN…SSML, VGWL…LVWI, and IFSI…PSPI.

This sequence belongs to the TIC214 family. Part of the Tic complex.

The protein localises to the plastid. Its subcellular location is the chloroplast inner membrane. Involved in protein precursor import into chloroplasts. May be part of an intermediate translocation complex acting as a protein-conducting channel at the inner envelope. The polypeptide is Protein TIC 214 (Nasturtium officinale (Watercress)).